The following is a 222-amino-acid chain: Leucyl/phenylalanyl-tRNA--protein transferase (222 aa).

It belongs to the L/F-transferase family.

The protein resides in the cytoplasm. The enzyme catalyses N-terminal L-lysyl-[protein] + L-leucyl-tRNA(Leu) = N-terminal L-leucyl-L-lysyl-[protein] + tRNA(Leu) + H(+). It carries out the reaction N-terminal L-arginyl-[protein] + L-leucyl-tRNA(Leu) = N-terminal L-leucyl-L-arginyl-[protein] + tRNA(Leu) + H(+). It catalyses the reaction L-phenylalanyl-tRNA(Phe) + an N-terminal L-alpha-aminoacyl-[protein] = an N-terminal L-phenylalanyl-L-alpha-aminoacyl-[protein] + tRNA(Phe). Its function is as follows. Functions in the N-end rule pathway of protein degradation where it conjugates Leu, Phe and, less efficiently, Met from aminoacyl-tRNAs to the N-termini of proteins containing an N-terminal arginine or lysine. This Legionella pneumophila (strain Paris) protein is Leucyl/phenylalanyl-tRNA--protein transferase.